A 491-amino-acid polypeptide reads, in one-letter code: LETM1 domain-containing protein LETM2, mitochondrial (491 aa).

The N-terminal 25 residues, 1–25 (MAFYSYNSVLAIARTRFPSHFVHPT), are a transit peptide targeting the mitochondrion. Topologically, residues 26–177 (CSSYSPSCAF…LLRTCVDFFR (152 aa)) are mitochondrial intermembrane. A compositionally biased stretch (polar residues) spans 94 to 109 (EQATKHPQVTSPQATK). The interval 94–115 (EQATKHPQVTSPQATKETGMEI) is disordered. Residues 178-198 (LVPFMVFLIVPFMEFLLPVFL) form a helical membrane-spanning segment. Residues 199–491 (KLFPEMLPST…QNSKASSKGA (293 aa)) lie on the Mitochondrial matrix side of the membrane. The stretch at 208–235 (TFESESKKEEKQKKKMAVKLELAKFLQE) forms a coiled coil. The Letm1 RBD domain occupies 221-438 (KKMAVKLELA…LAPQLKGTKD (218 aa)). The interval 435–491 (GTKDEDFIQPPPVTSSPITPSTPISLPKGPITSSEEPTLQAKSQMTAQNSKASSKGA) is disordered. Positions 449–461 (SSPITPSTPISLP) are enriched in low complexity. Residues 465–491 (ITSSEEPTLQAKSQMTAQNSKASSKGA) show a composition bias toward polar residues.

The protein resides in the mitochondrion inner membrane. In Homo sapiens (Human), this protein is LETM1 domain-containing protein LETM2, mitochondrial (LETM2).